A 160-amino-acid polypeptide reads, in one-letter code: Putative NrdI-like protein (160 aa).

The protein belongs to the NrdI family.

This chain is Putative NrdI-like protein, found in Streptococcus pyogenes serotype M1.